We begin with the raw amino-acid sequence, 746 residues long: Histone-lysine N-methyltransferase EZH2 (746 aa).

The segment at 1-340 (MGQTGKKSEK…AKEFAAALTA (340 aa)) is interaction with DNMT1, DNMT3A and DNMT3B. Ser-21 is subject to Phosphoserine; by PKB/AKT1. The interaction with EED stretch occupies residues 39-68 (KTMFSSNRQKILERTETLNQEWKQRRIQPV). An O-linked (GlcNAc) serine glycan is attached at Ser-75. The residue at position 76 (Ser-76) is a Phosphoserine. The tract at residues 180-217 (QYNDDDDDDDGDDPDEREEKQKDLEDNRDDKETCPPRK) is disordered. Over residues 182-195 (NDDDDDDDGDDPDE) the composition is skewed to acidic residues. Over residues 196–217 (REEKQKDLEDNRDDKETCPPRK) the composition is skewed to basic and acidic residues. The tract at residues 329–522 (EGAKEFAAAL…SSNHVYNYQP (194 aa)) is interaction with CDYL. Thr-339 carries the post-translational modification Phosphothreonine. A disordered region spans residues 340–426 (AERIKTPPKR…PIKMKPNIEP (87 aa)). Thr-345 bears the Phosphothreonine; by CDK1 and CDK2 mark. The segment covering 345–357 (TPPKRPGGRRRGR) has biased composition (basic residues). Phosphoserine is present on residues Ser-363 and Ser-366. Thr-367 is modified (phosphothreonine). Positions 374-385 (ESKDTDSDREAG) are enriched in basic and acidic residues. At Thr-487 the chain carries Phosphothreonine. One can recognise a CXC domain in the interval 503 to 605 (CRKIQLKKDG…SKNVSCKNCS (103 aa)). One can recognise an SET domain in the interval 612-727 (KHLLLAPSDV…TGEELFFDYR (116 aa)). Residue Lys-634 forms a Glycyl lysine isopeptide (Lys-Gly) (interchain with G-Cter in SUMO2) linkage.

It belongs to the class V-like SAM-binding methyltransferase superfamily. Histone-lysine methyltransferase family. EZ subfamily. As to quaternary structure, component of the PRC2/EED-EZH2 complex, which includes EED, EZH2, SUZ12, RBBP4 and RBBP7 and possibly AEBP2. The minimum components required for methyltransferase activity of the PRC2/EED-EZH2 complex are EED, EZH2 and SUZ12. The PRC2 complex may also interact with DNMT1, DNMT3A, DNMT3B and PHF1 via the EZH2 subunit and with SIRT1 via the SUZ12 subunit. Interacts with HDAC1 and HDAC2. Binds ATRX via the SET domain. Interacts with PRAME. Interacts with CDYL. Interacts with EED. Interacts with BMAL1. Interacts with CLOCK and CRY1. Interacts with DNMT3L; the interaction is direct. Interacts with EZHIP; the interaction blocks EZH2 methyltransferase activity. Interacts with ZNF263; recruited to the SIX3 promoter along with other proteins involved in chromatin modification and transcriptional corepression where it contributes to transcriptional repression. Interacts with ARMC12. Interacts with ZMYND8; the interaction is dependent on the presence of chromatin. Interacts with DDX18; this interaction inhibits the PRC2 complex. In terms of processing, phosphorylated by AKT1. Phosphorylation by AKT1 reduces methyltransferase activity. Phosphorylation at Thr-345 by CDK1 and CDK2 promotes maintenance of H3K27me3 levels at EZH2-target loci, thus leading to epigenetic gene silencing. Post-translationally, sumoylated. Glycosylated: O-GlcNAcylation at Ser-75 by OGT increases stability of EZH2 and facilitates the formation of H3K27me3 by the PRC2/EED-EZH2 complex. As to expression, present in actively dividing cells. Widely expressed in early embryos. In later embryogenesis, expression restricted to central and peripheral nervous system, liver and thymus. In adult, highest expression in spleen, testis and placenta. Lower levels in intestine, muscle and ovary and very low levels in brain and liver. No expression in heart, thyroid gland, lung and kidney.

The protein resides in the nucleus. It localises to the chromosome. The enzyme catalyses L-lysyl(27)-[histone H3] + 3 S-adenosyl-L-methionine = N(6),N(6),N(6)-trimethyl-L-lysyl(27)-[histone H3] + 3 S-adenosyl-L-homocysteine + 3 H(+). Functionally, polycomb group (PcG) protein. Catalytic subunit of the PRC2/EED-EZH2 complex, which methylates (H3K9me) and 'Lys-27' (H3K27me) of histone H3, leading to transcriptional repression of the affected target gene. Able to mono-, di- and trimethylate 'Lys-27' of histone H3 to form H3K27me1, H3K27me2 and H3K27me3, respectively. Displays a preference for substrates with less methylation, loses activity when progressively more methyl groups are incorporated into H3K27, H3K27me0 &gt; H3K27me1 &gt; H3K27me2. Compared to EZH1-containing complexes, it is more abundant in embryonic stem cells and plays a major role in forming H3K27me3, which is required for embryonic stem cell identity and proper differentiation. The PRC2/EED-EZH2 complex may also serve as a recruiting platform for DNA methyltransferases, thereby linking two epigenetic repression systems. Genes repressed by the PRC2/EED-EZH2 complex include HOXA7, HOXB6 and HOXC8. EZH2 can also methylate non-histone proteins such as the transcription factor GATA4 and the nuclear receptor RORA. Regulates the circadian clock via histone methylation at the promoter of the circadian genes. Essential for the CRY1/2-mediated repression of the transcriptional activation of PER1/2 by the CLOCK-BMAL1 heterodimer; involved in the di and trimethylation of 'Lys-27' of histone H3 on PER1/2 promoters which is necessary for the CRY1/2 proteins to inhibit transcription. In Mus musculus (Mouse), this protein is Histone-lysine N-methyltransferase EZH2.